Here is a 166-residue protein sequence, read N- to C-terminus: Large ribosomal subunit protein uL10 (166 aa).

The protein belongs to the universal ribosomal protein uL10 family. As to quaternary structure, part of the ribosomal stalk of the 50S ribosomal subunit. The N-terminus interacts with L11 and the large rRNA to form the base of the stalk. The C-terminus forms an elongated spine to which L12 dimers bind in a sequential fashion forming a multimeric L10(L12)X complex.

Forms part of the ribosomal stalk, playing a central role in the interaction of the ribosome with GTP-bound translation factors. This Shewanella woodyi (strain ATCC 51908 / MS32) protein is Large ribosomal subunit protein uL10.